The following is a 359-amino-acid chain: Alanine racemase, biosynthetic (359 aa).

Lysine 34 functions as the Proton acceptor; specific for D-alanine in the catalytic mechanism. Lysine 34 bears the N6-(pyridoxal phosphate)lysine mark. Arginine 129 provides a ligand contact to substrate. Residue tyrosine 255 is the Proton acceptor; specific for L-alanine of the active site. Methionine 303 lines the substrate pocket.

This sequence belongs to the alanine racemase family. In terms of assembly, monomer but homodimer in the presence of the substrate. Pyridoxal 5'-phosphate serves as cofactor.

The catalysed reaction is L-alanine = D-alanine. Its pathway is amino-acid biosynthesis; D-alanine biosynthesis; D-alanine from L-alanine: step 1/1. It functions in the pathway cell wall biogenesis; peptidoglycan biosynthesis. Functionally, catalyzes the interconversion of L-alanine and D-alanine. The protein is Alanine racemase, biosynthetic (alr) of Shigella dysenteriae.